The sequence spans 265 residues: Putative 2-amino-3,7-dideoxy-D-threo-hept-6-ulosonate synthase 2 (265 aa).

Aspartate 27 functions as the Proton acceptor in the catalytic mechanism. 1-deoxy-D-threo-hexo-2,5-diulose 6-phosphate contacts are provided by residues 27–31 (DHGVS) and 147–149 (YPR). The active-site Proton donor is tyrosine 147. Lysine 177 (schiff-base intermediate with substrate) is an active-site residue. Residues 202–203 (GG) and 230–231 (GR) contribute to the 1-deoxy-D-threo-hexo-2,5-diulose 6-phosphate site.

The protein belongs to the DeoC/FbaB aldolase family. ADHS subfamily. In terms of assembly, homodecamer.

The enzyme catalyses 1-deoxy-D-threo-hexo-2,5-diulose 6-phosphate + L-aspartate 4-semialdehyde = 2,3-dioxopropyl phosphate + 2-amino-2,3,7-trideoxy-D-lyxo-hept-6-ulosonate. Its function is as follows. Catalyzes a transaldol reaction between 6-deoxy-5-ketofructose 1-phosphate (DKFP) and L-aspartate semialdehyde (ASA) with an elimination of hydroxypyruvaldehyde phosphate to yield 2-amino-3,7-dideoxy-D-threo-hept-6-ulosonate (ADH). Plays a key role in an alternative pathway of the biosynthesis of 3-dehydroquinate (DHQ), which is involved in the canonical pathway for the biosynthesis of aromatic amino acids. The polypeptide is Putative 2-amino-3,7-dideoxy-D-threo-hept-6-ulosonate synthase 2 (Archaeoglobus fulgidus (strain ATCC 49558 / DSM 4304 / JCM 9628 / NBRC 100126 / VC-16)).